Reading from the N-terminus, the 134-residue chain is Replication enhancer protein (134 aa).

The protein belongs to the geminiviridae replication enhancer protein family. As to quaternary structure, homooligomer. Interacts with the replication-associated protein (REP). Interacts with host proliferating cell nuclear antigen (PCNA). Interacts with host retinoblastoma-related protein 1 (RBR1), and may thereby deregulate the host cell cycle. Oligomerization and interaction with PCNA are necessary for optimal replication enhancement.

Increases viral DNA accumulation. Enhances infectivity and symptom expression. This is Replication enhancer protein from Squash leaf curl virus (SLCV).